A 721-amino-acid polypeptide reads, in one-letter code: Ribonucleoside-diphosphate reductase subunit alpha (721 aa).

Substrate-binding positions include Thr-168, 184 to 185, Gly-213, 393 to 397, and 595 to 599; these read SC, NLCSE, and PTGSI. An intrachain disulfide couples Cys-185 to Cys-422. The Proton acceptor role is filled by Asn-393. The Cysteine radical intermediate role is filled by Cys-395. Catalysis depends on Glu-397, which acts as the Proton acceptor.

Belongs to the ribonucleoside diphosphate reductase large chain family. Tetramer of two alpha and two beta subunits.

It catalyses the reaction a 2'-deoxyribonucleoside 5'-diphosphate + [thioredoxin]-disulfide + H2O = a ribonucleoside 5'-diphosphate + [thioredoxin]-dithiol. Its activity is regulated as follows. Under complex allosteric control mediated by deoxynucleoside triphosphates and ATP binding. The type of nucleotide bound at the specificity site determines substrate preference. It seems probable that ATP makes the enzyme reduce CDP and UDP, dGTP favors ADP reduction and dTTP favors GDP reduction. Functionally, provides the precursors necessary for DNA synthesis. Catalyzes the biosynthesis of deoxyribonucleotides from the corresponding ribonucleotides. This chain is Ribonucleoside-diphosphate reductase subunit alpha (nrdE), found in Mycobacterium leprae (strain TN).